Consider the following 307-residue polypeptide: Bifunctional protein FolD (307 aa).

Residues 165–167 (GRS), S190, and I231 contribute to the NADP(+) site.

This sequence belongs to the tetrahydrofolate dehydrogenase/cyclohydrolase family. As to quaternary structure, homodimer.

The enzyme catalyses (6R)-5,10-methylene-5,6,7,8-tetrahydrofolate + NADP(+) = (6R)-5,10-methenyltetrahydrofolate + NADPH. The catalysed reaction is (6R)-5,10-methenyltetrahydrofolate + H2O = (6R)-10-formyltetrahydrofolate + H(+). It functions in the pathway one-carbon metabolism; tetrahydrofolate interconversion. Its function is as follows. Catalyzes the oxidation of 5,10-methylenetetrahydrofolate to 5,10-methenyltetrahydrofolate and then the hydrolysis of 5,10-methenyltetrahydrofolate to 10-formyltetrahydrofolate. This chain is Bifunctional protein FolD, found in Koribacter versatilis (strain Ellin345).